The primary structure comprises 245 residues: Orotidine 5'-phosphate decarboxylase (245 aa).

Residues aspartate 22, lysine 44, 71 to 80 (DLKFHDIPNT), threonine 131, arginine 192, glutamine 201, glycine 221, and arginine 222 each bind substrate. Lysine 73 acts as the Proton donor in catalysis.

The protein belongs to the OMP decarboxylase family. Type 1 subfamily. As to quaternary structure, homodimer.

It catalyses the reaction orotidine 5'-phosphate + H(+) = UMP + CO2. The protein operates within pyrimidine metabolism; UMP biosynthesis via de novo pathway; UMP from orotate: step 2/2. Its function is as follows. Catalyzes the decarboxylation of orotidine 5'-monophosphate (OMP) to uridine 5'-monophosphate (UMP). This is Orotidine 5'-phosphate decarboxylase from Shigella flexneri.